Reading from the N-terminus, the 255-residue chain is 3-deoxy-manno-octulosonate cytidylyltransferase (255 aa).

It belongs to the KdsB family.

Its subcellular location is the cytoplasm. It carries out the reaction 3-deoxy-alpha-D-manno-oct-2-ulosonate + CTP = CMP-3-deoxy-beta-D-manno-octulosonate + diphosphate. It functions in the pathway nucleotide-sugar biosynthesis; CMP-3-deoxy-D-manno-octulosonate biosynthesis; CMP-3-deoxy-D-manno-octulosonate from 3-deoxy-D-manno-octulosonate and CTP: step 1/1. The protein operates within bacterial outer membrane biogenesis; lipopolysaccharide biosynthesis. Functionally, activates KDO (a required 8-carbon sugar) for incorporation into bacterial lipopolysaccharide in Gram-negative bacteria. This Pelobacter propionicus (strain DSM 2379 / NBRC 103807 / OttBd1) protein is 3-deoxy-manno-octulosonate cytidylyltransferase.